The sequence spans 114 residues: T cell receptor alpha variable 24 (114 aa).

A signal peptide spans M1–S22. An Ig-like domain is found at I23–F114. Residue N42 is glycosylated (N-linked (GlcNAc...) asparagine). A disulfide bond links C45 and C112.

As to quaternary structure, alpha-beta TR is a heterodimer composed of an alpha and beta chain; disulfide-linked. The alpha-beta TR is associated with the transmembrane signaling CD3 coreceptor proteins to form the TR-CD3 (TcR or TCR). The assembly of alpha-beta TR heterodimers with CD3 occurs in the endoplasmic reticulum where a single alpha-beta TR heterodimer associates with one CD3D-CD3E heterodimer, one CD3G-CD3E heterodimer and one CD247 homodimer forming a stable octameric structure. CD3D-CD3E and CD3G-CD3E heterodimers preferentially associate with TR alpha and TR beta chains, respectively. The association of the CD247 homodimer is the last step of TcR assembly in the endoplasmic reticulum and is required for transport to the cell surface.

The protein localises to the cell membrane. Functionally, v region of the variable domain of T cell receptor (TR) alpha chain that participates in the antigen recognition. Alpha-beta T cell receptors are antigen specific receptors which are essential to the immune response and are present on the cell surface of T lymphocytes. Recognize peptide-major histocompatibility (MH) (pMH) complexes that are displayed by antigen presenting cells (APC), a prerequisite for efficient T cell adaptive immunity against pathogens. Binding of alpha-beta TR to pMH complex initiates TR-CD3 clustering on the cell surface and intracellular activation of LCK that phosphorylates the ITAM motifs of CD3G, CD3D, CD3E and CD247 enabling the recruitment of ZAP70. In turn ZAP70 phosphorylates LAT, which recruits numerous signaling molecules to form the LAT signalosome. The LAT signalosome propagates signal branching to three major signaling pathways, the calcium, the mitogen-activated protein kinase (MAPK) kinase and the nuclear factor NF-kappa-B (NF-kB) pathways, leading to the mobilization of transcription factors that are critical for gene expression and essential for T cell growth and differentiation. The T cell repertoire is generated in the thymus, by V-(D)-J rearrangement. This repertoire is then shaped by intrathymic selection events to generate a peripheral T cell pool of self-MH restricted, non-autoaggressive T cells. Post-thymic interaction of alpha-beta TR with the pMH complexes shapes TR structural and functional avidity. In Homo sapiens (Human), this protein is T cell receptor alpha variable 24.